Here is a 1300-residue protein sequence, read N- to C-terminus: MADATTSRIDFSKIKSIINSPDLLKVQLDSFHNFIQDSVPLAKRKDQGLERVLRGAFPITDTRGLYLLEYISYAFDKPKYTVEECIERGLTYDVSLKVKLKLSYKDEADEPDWKETIQQEVYLGRIPYMTERGTFIVNGAERVVVAQLHRSPGVVFSEAVHPNGKKMFSAKIVPTRGSWIEFQTDINNQIFVYIDQKKNFLVTALLRAIGFARDEDILALFDLVEEVSLKASKREQLVGQYLASDIVDMQTGEVISARTAITEEIFEQILLAGYKSIKVMKSFSNNEKGMDKSVIINTILNDSSATEEEALEIVYEELRANEAPDIEAARSFLERTFFNQKKYDLGDVGRYRIKKKLRREFEELYSFIGEKPELKALSDTIEEKILQTIQTYSDEPIGEDILVLTHYDIIAVIYYLIKLVNGQAEVDDVDHLANRRVRSVGEQLAAQFVVGLARMGKNVREKLNSRDSDKIAPSDLINARTVSSVVSSFFATSQLSQFMDQTNPLAEMTNKRRVSALGPGGLTRERAGFEVRDVHYTHYGRLCPIETPEGPNIGLISSLSVYAEINDKGFIQTPYRLVDNGQVTDTVVMLSAEDEENKITVPVSIPLDENNRIAVETVQARTKGDYPVVAATDVHYMDVSPVQIVSAAAALIPFLEHDDGNRALMGANMQRQAVPLLTSDAPVVGTGMEGKVARDSRAVIVAEGPGEVVDVTADYIQVRYQLDADNNLRLSMLDPDEGLKTYKLIKFKRSNQDTCISQKPLVRIGDKVEKNTVLADSSSTEYGELALGKNVLVAFMPWRGYNFEDAIILSERLVYDDVFTSIHIHEFEANVRDTKRGEEQFTRDIYNVSEEALRNLDENGIVRCGAEVKERDILVGKITPKGESDPTPEEKLLRAIFGDKSSDVKDASMHVPAGMKGIIIKTKLFSRKKKIGLDIKEKIELLDKQFAAKEYDLRKRFAKWLKHFLDGKTSTGVYNDKGKVVVPEGTVFEESVLAKFATAQFLESVDLSRGVVSSDKTNKNVTRLIKEFRFLLKDIADERENEKYKVNVGDELPPGIEELAKVYIAQKRKIQVGDKMAGRHGNKGVVGKILPVEDMPFMADGTPVDIVLNPLGVPSRMNIGQLYETSLGWAAKKLGVKFKTPIFNGATYEEVQRELERAGLPTHGKVSLFDGRTGERFDDEVTVGYIYMLKLSHLVDDKIHARSTGPYSLITQQPLGGKAQFGGQRFGEMEVWALEAYGASNILREMLTVKSDDVVGRNKTYEAIVKGQNLPEPGIPESFNVLVRELQGLGLEIRIDDKVP.

Belongs to the RNA polymerase beta chain family. In terms of assembly, the RNAP catalytic core consists of 2 alpha, 1 beta, 1 beta' and 1 omega subunit. When a sigma factor is associated with the core the holoenzyme is formed, which can initiate transcription.

It carries out the reaction RNA(n) + a ribonucleoside 5'-triphosphate = RNA(n+1) + diphosphate. In terms of biological role, DNA-dependent RNA polymerase catalyzes the transcription of DNA into RNA using the four ribonucleoside triphosphates as substrates. This chain is DNA-directed RNA polymerase subunit beta, found in Chlorobium chlorochromatii (strain CaD3).